A 574-amino-acid polypeptide reads, in one-letter code: Proline--tRNA ligase (574 aa).

It belongs to the class-II aminoacyl-tRNA synthetase family. ProS type 1 subfamily. In terms of assembly, homodimer.

It is found in the cytoplasm. The catalysed reaction is tRNA(Pro) + L-proline + ATP = L-prolyl-tRNA(Pro) + AMP + diphosphate. Catalyzes the attachment of proline to tRNA(Pro) in a two-step reaction: proline is first activated by ATP to form Pro-AMP and then transferred to the acceptor end of tRNA(Pro). As ProRS can inadvertently accommodate and process non-cognate amino acids such as alanine and cysteine, to avoid such errors it has two additional distinct editing activities against alanine. One activity is designated as 'pretransfer' editing and involves the tRNA(Pro)-independent hydrolysis of activated Ala-AMP. The other activity is designated 'posttransfer' editing and involves deacylation of mischarged Ala-tRNA(Pro). The misacylated Cys-tRNA(Pro) is not edited by ProRS. This is Proline--tRNA ligase from Thioalkalivibrio sulfidiphilus (strain HL-EbGR7).